Consider the following 86-residue polypeptide: Putative membrane protein insertion efficiency factor (86 aa).

Belongs to the UPF0161 family.

It localises to the cell membrane. Could be involved in insertion of integral membrane proteins into the membrane. In Streptococcus pyogenes serotype M1, this protein is Putative membrane protein insertion efficiency factor.